A 390-amino-acid chain; its full sequence is UPF0496 protein At1g20180 (390 aa).

Transmembrane regions (helical) follow at residues 228–248 (LGGYSLVITHSAIVITLLIIA) and 250–270 (HSILGVFAAPALLGLCSFCLL).

This sequence belongs to the UPF0496 family.

It localises to the membrane. The protein is UPF0496 protein At1g20180 of Arabidopsis thaliana (Mouse-ear cress).